Consider the following 185-residue polypeptide: Ribosome-recycling factor (185 aa).

This sequence belongs to the RRF family.

The protein resides in the cytoplasm. In terms of biological role, responsible for the release of ribosomes from messenger RNA at the termination of protein biosynthesis. May increase the efficiency of translation by recycling ribosomes from one round of translation to another. This chain is Ribosome-recycling factor, found in Corynebacterium aurimucosum (strain ATCC 700975 / DSM 44827 / CIP 107346 / CN-1) (Corynebacterium nigricans).